Here is a 125-residue protein sequence, read N- to C-terminus: Glycine cleavage system H protein (125 aa).

Residues S22 to T104 form the Lipoyl-binding domain. K63 carries the post-translational modification N6-lipoyllysine.

This sequence belongs to the GcvH family. In terms of assembly, the glycine cleavage system is composed of four proteins: P, T, L and H. Requires (R)-lipoate as cofactor.

Its function is as follows. The glycine cleavage system catalyzes the degradation of glycine. The H protein shuttles the methylamine group of glycine from the P protein to the T protein. Is also involved in protein lipoylation via its role as an octanoyl/lipoyl carrier protein intermediate. This is Glycine cleavage system H protein from Listeria innocua serovar 6a (strain ATCC BAA-680 / CLIP 11262).